Consider the following 453-residue polypeptide: Bifunctional protein GlmU (453 aa).

Positions 1-228 (MPHWAAVIMA…VHEALGINSR (228 aa)) are pyrophosphorylase. UDP-N-acetyl-alpha-D-glucosamine is bound by residues K23, Q73, 78–79 (GT), 100–102 (SGD), G139, E153, N168, and N226. D102 lines the Mg(2+) pocket. N226 is a binding site for Mg(2+). The interval 229-249 (AQLAAAEDVARQRILSYWMEE) is linker. The interval 250–453 (GVTIIDPRST…IENWVRNKKK (204 aa)) is N-acetyltransferase. UDP-N-acetyl-alpha-D-glucosamine-binding residues include R331 and K349. Residue H361 is the Proton acceptor of the active site. UDP-N-acetyl-alpha-D-glucosamine-binding residues include Y364 and N375. Residues A378, 384–385 (NY), S403, A421, and R438 each bind acetyl-CoA.

This sequence in the N-terminal section; belongs to the N-acetylglucosamine-1-phosphate uridyltransferase family. It in the C-terminal section; belongs to the transferase hexapeptide repeat family. Homotrimer. Requires Mg(2+) as cofactor.

It localises to the cytoplasm. The catalysed reaction is alpha-D-glucosamine 1-phosphate + acetyl-CoA = N-acetyl-alpha-D-glucosamine 1-phosphate + CoA + H(+). It catalyses the reaction N-acetyl-alpha-D-glucosamine 1-phosphate + UTP + H(+) = UDP-N-acetyl-alpha-D-glucosamine + diphosphate. It functions in the pathway nucleotide-sugar biosynthesis; UDP-N-acetyl-alpha-D-glucosamine biosynthesis; N-acetyl-alpha-D-glucosamine 1-phosphate from alpha-D-glucosamine 6-phosphate (route II): step 2/2. The protein operates within nucleotide-sugar biosynthesis; UDP-N-acetyl-alpha-D-glucosamine biosynthesis; UDP-N-acetyl-alpha-D-glucosamine from N-acetyl-alpha-D-glucosamine 1-phosphate: step 1/1. Its pathway is bacterial outer membrane biogenesis; LPS lipid A biosynthesis. Its function is as follows. Catalyzes the last two sequential reactions in the de novo biosynthetic pathway for UDP-N-acetylglucosamine (UDP-GlcNAc). The C-terminal domain catalyzes the transfer of acetyl group from acetyl coenzyme A to glucosamine-1-phosphate (GlcN-1-P) to produce N-acetylglucosamine-1-phosphate (GlcNAc-1-P), which is converted into UDP-GlcNAc by the transfer of uridine 5-monophosphate (from uridine 5-triphosphate), a reaction catalyzed by the N-terminal domain. This Desulfitobacterium hafniense (strain Y51) protein is Bifunctional protein GlmU.